The chain runs to 304 residues: MLWAHRKKRKAATETTEDKPLESHRANDSWIKSHFSRLSEERLPTYRYVSNNGHSPESRHGEVNTTLHVDTLTTKHGERGAALHRDSFASKQKISGSSMTKEMQRESGKSPSMEDDTWAAVAACTKEIDAKGHRVANSMLQRSTTHRRKGHAESRNISPEELKALEEVEIKLKGNFLTHHETGVAGANQSHTVYSQSRHSNQSHHSYPSHQSNQSHPVYSSYQGHHPSHLSPQSYPSYSSHQSHPGHSNHQGHSGLSSHQTHLGHSNHQGHPGHSSHQSHQGQPGHPSHQSHNLPNRRNPIYGS.

Over residues 1–10 (MLWAHRKKRK) the composition is skewed to basic residues. The tract at residues 1-28 (MLWAHRKKRKAATETTEDKPLESHRAND) is disordered. Positions 16–27 (TEDKPLESHRAN) are enriched in basic and acidic residues. Ser39 is subject to Phosphoserine. The segment covering 91–101 (KQKISGSSMTK) has biased composition (polar residues). Disordered stretches follow at residues 91–115 (KQKISGSSMTKEMQRESGKSPSMED), 138–160 (SMLQRSTTHRRKGHAESRNISPE), and 190–304 (SHTV…IYGS). Residues 151-160 (HAESRNISPE) are compositionally biased toward basic and acidic residues. Ser158 bears the Phosphoserine mark. The segment covering 195–206 (SQSRHSNQSHHS) has biased composition (low complexity). The span at 208-223 (PSHQSNQSHPVYSSYQ) shows a compositional bias: polar residues. Low complexity predominate over residues 229–248 (HLSPQSYPSYSSHQSHPGHS). The segment covering 249–263 (NHQGHSGLSSHQTHL) has biased composition (polar residues). Positions 264-292 (GHSNHQGHPGHSSHQSHQGQPGHPSHQSH) are enriched in low complexity.

This is an uncharacterized protein from Mus musculus (Mouse).